The primary structure comprises 283 residues: MSTYLIGDVHGCFDELKSLLAQVAFDPQQDQLWLTGDLVARGPGSLDVLRYVRSLGPAVRMVLGNHDLHLLAVYAGISRNKPKDRITPLLEAPDADELINWLRRQPVLQVDEQLKLVMAHAGITPQWDIETAQLCAREVEAVLSSDSYPLFLDAMYGDMPNNWSPELSGLARLRFSTNALTRMRYCFPNGQLDMICKDAPGTAPAPLKPWFELPRLVDADYTIIFGHWASLEGRGTPAGVIGLDTGCCWGGDLTMLRWEDQQYFTQPANRRDLLDGVHQQAAS.

The protein belongs to the Ap4A hydrolase family.

The enzyme catalyses P(1),P(4)-bis(5'-adenosyl) tetraphosphate + H2O = 2 ADP + 2 H(+). Its function is as follows. Hydrolyzes diadenosine 5',5'''-P1,P4-tetraphosphate to yield ADP. The sequence is that of Bis(5'-nucleosyl)-tetraphosphatase, symmetrical from Serratia proteamaculans (strain 568).